The sequence spans 432 residues: Trigger factor (432 aa).

Residues 161-246 (GTRATINFVG…VVKVESRELP (86 aa)) form the PPIase FKBP-type domain.

The protein belongs to the FKBP-type PPIase family. Tig subfamily.

The protein resides in the cytoplasm. It carries out the reaction [protein]-peptidylproline (omega=180) = [protein]-peptidylproline (omega=0). In terms of biological role, involved in protein export. Acts as a chaperone by maintaining the newly synthesized protein in an open conformation. Functions as a peptidyl-prolyl cis-trans isomerase. This Aliivibrio fischeri (strain ATCC 700601 / ES114) (Vibrio fischeri) protein is Trigger factor.